A 114-amino-acid chain; its full sequence is uncharacterized protein (114 aa).

This sequence to M.kandleri MK0008.

This is an uncharacterized protein from Methanocaldococcus jannaschii (strain ATCC 43067 / DSM 2661 / JAL-1 / JCM 10045 / NBRC 100440) (Methanococcus jannaschii).